The chain runs to 282 residues: Acetylglutamate kinase (282 aa).

Residues 62 to 63, Arg-84, and Asn-178 contribute to the substrate site; that span reads GG.

It belongs to the acetylglutamate kinase family. ArgB subfamily.

It is found in the cytoplasm. The enzyme catalyses N-acetyl-L-glutamate + ATP = N-acetyl-L-glutamyl 5-phosphate + ADP. Its pathway is amino-acid biosynthesis; L-arginine biosynthesis; N(2)-acetyl-L-ornithine from L-glutamate: step 2/4. Its function is as follows. Catalyzes the ATP-dependent phosphorylation of N-acetyl-L-glutamate. The protein is Acetylglutamate kinase of Kosmotoga olearia (strain ATCC BAA-1733 / DSM 21960 / TBF 19.5.1).